Reading from the N-terminus, the 323-residue chain is tRNA dimethylallyltransferase (323 aa).

12-19 (GPTAAGKT) is an ATP binding site. Substrate is bound at residue 14 to 19 (TAAGKT). 2 interaction with substrate tRNA regions span residues 37 to 40 (DSAL) and 161 to 165 (QRLMR).

It belongs to the IPP transferase family. As to quaternary structure, monomer. Requires Mg(2+) as cofactor.

The catalysed reaction is adenosine(37) in tRNA + dimethylallyl diphosphate = N(6)-dimethylallyladenosine(37) in tRNA + diphosphate. Its function is as follows. Catalyzes the transfer of a dimethylallyl group onto the adenine at position 37 in tRNAs that read codons beginning with uridine, leading to the formation of N6-(dimethylallyl)adenosine (i(6)A). This Pseudomonas aeruginosa (strain LESB58) protein is tRNA dimethylallyltransferase.